A 179-amino-acid polypeptide reads, in one-letter code: ATP synthase subunit delta (179 aa).

The protein belongs to the ATPase delta chain family. F-type ATPases have 2 components, F(1) - the catalytic core - and F(0) - the membrane proton channel. F(1) has five subunits: alpha(3), beta(3), gamma(1), delta(1), epsilon(1). F(0) has three main subunits: a(1), b(2) and c(10-14). The alpha and beta chains form an alternating ring which encloses part of the gamma chain. F(1) is attached to F(0) by a central stalk formed by the gamma and epsilon chains, while a peripheral stalk is formed by the delta and b chains.

The protein resides in the cell membrane. Functionally, f(1)F(0) ATP synthase produces ATP from ADP in the presence of a proton or sodium gradient. F-type ATPases consist of two structural domains, F(1) containing the extramembraneous catalytic core and F(0) containing the membrane proton channel, linked together by a central stalk and a peripheral stalk. During catalysis, ATP synthesis in the catalytic domain of F(1) is coupled via a rotary mechanism of the central stalk subunits to proton translocation. This protein is part of the stalk that links CF(0) to CF(1). It either transmits conformational changes from CF(0) to CF(1) or is implicated in proton conduction. The sequence is that of ATP synthase subunit delta from Clostridium botulinum (strain ATCC 19397 / Type A).